The primary structure comprises 553 residues: Serine/threonine-protein kinase WNG2 (553 aa).

Disordered stretches follow at residues 1-20 and 88-107; these read MMFP…RLQR and NREP…GGAE. A signal peptide spans 1–64; sequence MMFPAVAAPP…GLSWVSVAVA (64 aa). The Protein kinase domain maps to 125–395; it reads FKQLRPVDEF…IGEVMEDPFF (271 aa). Lysine 186 is an ATP binding site. Aspartate 278 (proton acceptor) is an active-site residue. Positions 432–553 are disordered; sequence REKADAAAKA…GFNKEDAQES (122 aa). A compositionally biased stretch (low complexity) spans 438-451; the sequence is AAKAADNAEVPAAK. 3 stretches are compositionally biased toward basic and acidic residues: residues 465–486, 494–524, and 531–553; these read GDRD…EKGR, EGNH…ENRE, and QREE…AQES.

Belongs to the protein kinase superfamily. STE Ser/Thr protein kinase family. WNG subfamily. Mg(2+) serves as cofactor.

It is found in the cytoplasmic granule. It localises to the secreted. The protein localises to the parasitophorous vacuole lumen. It carries out the reaction L-seryl-[protein] + ATP = O-phospho-L-seryl-[protein] + ADP + H(+). The enzyme catalyses L-threonyl-[protein] + ATP = O-phospho-L-threonyl-[protein] + ADP + H(+). In terms of biological role, probable serine/threonine-protein kinase. The protein is Serine/threonine-protein kinase WNG2 of Toxoplasma gondii.